Here is a 146-residue protein sequence, read N- to C-terminus: Large ribosomal subunit protein uL15 (146 aa).

The segment at 1 to 58 (MRLHELHPAPGSRPRATRVGRGIGSGLGKTSGRGHKGQKARSGGGVRRGFEGGQMPLT) is disordered. Positions 21–31 (RGIGSGLGKTS) are enriched in gly residues.

It belongs to the universal ribosomal protein uL15 family. As to quaternary structure, part of the 50S ribosomal subunit.

Its function is as follows. Binds to the 23S rRNA. The protein is Large ribosomal subunit protein uL15 of Moorella thermoacetica (strain ATCC 39073 / JCM 9320).